A 586-amino-acid chain; its full sequence is Actin-related protein 9 (586 aa).

The disordered stretch occupies residues 141 to 169 (STPIVDKDADVDPLQRSTPDDTEPNSEEN).

Belongs to the actin family. ARP8 subfamily.

This is Actin-related protein 9 (ARP9) from Oryza sativa subsp. japonica (Rice).